We begin with the raw amino-acid sequence, 627 residues long: Transketolase-like protein 2 (627 aa).

Substrate is bound at residue histidine 39. Residues serine 42, histidine 79, and 125–127 (GSL) contribute to the thiamine diphosphate site. Aspartate 157 is a binding site for Mg(2+). 2 residues coordinate thiamine diphosphate: glycine 158 and asparagine 187. 2 residues coordinate Mg(2+): asparagine 187 and leucine 189. The thiamine diphosphate site is built by lysine 249 and histidine 263. Residues histidine 263, arginine 323, and serine 350 each coordinate substrate. 2 residues coordinate thiamine diphosphate: glutamate 371 and phenylalanine 397. The Proton donor role is filled by glutamate 371. Substrate contacts are provided by histidine 421 and aspartate 429. Glutamine 433 is a thiamine diphosphate binding site. Arginine 479 is a substrate binding site.

It belongs to the transketolase family. Homodimer. Mg(2+) serves as cofactor. Requires Ca(2+) as cofactor. Mn(2+) is required as a cofactor. The cofactor is Co(2+). It depends on thiamine diphosphate as a cofactor.

The catalysed reaction is D-sedoheptulose 7-phosphate + D-glyceraldehyde 3-phosphate = aldehydo-D-ribose 5-phosphate + D-xylulose 5-phosphate. Functionally, plays an essential role in total transketolase activity and cell proliferation in cancer cells; after transfection with anti-TKTL1 siRNA, total transketolase activity dramatically decreases and proliferation was significantly inhibited in cancer cells. Plays a pivotal role in carcinogenesis. In Mus musculus (Mouse), this protein is Transketolase-like protein 2 (Tktl2).